An 87-amino-acid chain; its full sequence is UPF0729 protein C18orf32 homolog (87 aa).

This sequence belongs to the UPF0729 family.

The sequence is that of UPF0729 protein C18orf32 homolog from Esox lucius (Northern pike).